A 340-amino-acid chain; its full sequence is Phosphatidylglycerol--prolipoprotein diacylglyceryl transferase (340 aa).

4 helical membrane passes run 19 to 39 (IPLR…VWLG), 54 to 74 (ADIA…YHVI), 93 to 113 (IWEG…GAWI), and 119 to 139 (GIPL…AQAF). R141 is a binding site for a 1,2-diacyl-sn-glycero-3-phospho-(1'-sn-glycerol). Helical transmembrane passes span 176 to 196 (HPTF…VIWA), 202 to 221 (LGHG…GRAW), and 238 to 258 (LNDW…VLSS). The interval 266 to 340 (EIVEPGASDT…ESAAESAKKV (75 aa)) is disordered. The segment covering 284–294 (DLGKDEDKATT) has biased composition (basic and acidic residues). Over residues 295–307 (DKATATDTSTTTD) the composition is skewed to low complexity. Residues 326–340 (PSEKTESAAESAKKV) are compositionally biased toward basic and acidic residues.

This sequence belongs to the Lgt family.

It is found in the cell membrane. The enzyme catalyses L-cysteinyl-[prolipoprotein] + a 1,2-diacyl-sn-glycero-3-phospho-(1'-sn-glycerol) = an S-1,2-diacyl-sn-glyceryl-L-cysteinyl-[prolipoprotein] + sn-glycerol 1-phosphate + H(+). The protein operates within protein modification; lipoprotein biosynthesis (diacylglyceryl transfer). Catalyzes the transfer of the diacylglyceryl group from phosphatidylglycerol to the sulfhydryl group of the N-terminal cysteine of a prolipoprotein, the first step in the formation of mature lipoproteins. The polypeptide is Phosphatidylglycerol--prolipoprotein diacylglyceryl transferase (Streptomyces avermitilis (strain ATCC 31267 / DSM 46492 / JCM 5070 / NBRC 14893 / NCIMB 12804 / NRRL 8165 / MA-4680)).